Reading from the N-terminus, the 353-residue chain is S-adenosylmethionine:tRNA ribosyltransferase-isomerase (353 aa).

Belongs to the QueA family. Monomer.

The protein resides in the cytoplasm. It catalyses the reaction 7-aminomethyl-7-carbaguanosine(34) in tRNA + S-adenosyl-L-methionine = epoxyqueuosine(34) in tRNA + adenine + L-methionine + 2 H(+). It participates in tRNA modification; tRNA-queuosine biosynthesis. In terms of biological role, transfers and isomerizes the ribose moiety from AdoMet to the 7-aminomethyl group of 7-deazaguanine (preQ1-tRNA) to give epoxyqueuosine (oQ-tRNA). This chain is S-adenosylmethionine:tRNA ribosyltransferase-isomerase, found in Nitrosomonas europaea (strain ATCC 19718 / CIP 103999 / KCTC 2705 / NBRC 14298).